A 125-amino-acid polypeptide reads, in one-letter code: Prefoldin subunit beta (125 aa).

This sequence belongs to the prefoldin subunit beta family. In terms of assembly, heterohexamer of two alpha and four beta subunits.

The protein localises to the cytoplasm. Its function is as follows. Molecular chaperone capable of stabilizing a range of proteins. Seems to fulfill an ATP-independent, HSP70-like function in archaeal de novo protein folding. The protein is Prefoldin subunit beta of Sulfolobus acidocaldarius (strain ATCC 33909 / DSM 639 / JCM 8929 / NBRC 15157 / NCIMB 11770).